Here is a 382-residue protein sequence, read N- to C-terminus: 8-amino-7-oxononanoate synthase (382 aa).

Arg26 contributes to the substrate binding site. 104–105 (GY) is a binding site for pyridoxal 5'-phosphate. His129 lines the substrate pocket. Residues Ser175, 200 to 203 (DEAH), and 232 to 235 (TLSK) contribute to the pyridoxal 5'-phosphate site. Lys235 bears the N6-(pyridoxal phosphate)lysine mark. Substrate is bound at residue Thr345.

The protein belongs to the class-II pyridoxal-phosphate-dependent aminotransferase family. BioF subfamily. As to quaternary structure, homodimer. Pyridoxal 5'-phosphate serves as cofactor.

It catalyses the reaction 6-carboxyhexanoyl-[ACP] + L-alanine + H(+) = (8S)-8-amino-7-oxononanoate + holo-[ACP] + CO2. It functions in the pathway cofactor biosynthesis; biotin biosynthesis. Catalyzes the decarboxylative condensation of pimeloyl-[acyl-carrier protein] and L-alanine to produce 8-amino-7-oxononanoate (AON), [acyl-carrier protein], and carbon dioxide. In Mycobacterium sp. (strain KMS), this protein is 8-amino-7-oxononanoate synthase.